Here is a 181-residue protein sequence, read N- to C-terminus: BURP domain-containing protein 7 (181 aa).

The N-terminal stretch at 1–21 (MARSLAALLLLLVAAAGDSHA) is a signal peptide. The BURP domain occupies 65–181 (FFLEKDLFPG…RRGRRTGWRP (117 aa)). The segment at 112–181 (QLSVPAGSPA…RRGRRTGWRP (70 aa)) is disordered. Over residues 128–143 (RPRRSPARRSNARRRS) the composition is skewed to basic residues. The span at 144 to 157 (SPWWSSPRPASAPA) shows a compositional bias: low complexity. Over residues 170–181 (GRRRGRRTGWRP) the composition is skewed to basic residues.

Expressed in roots, stems, leaves and shoot.

This chain is BURP domain-containing protein 7 (BURP7), found in Oryza sativa subsp. japonica (Rice).